Reading from the N-terminus, the 309-residue chain is Protein FdhE (309 aa).

It belongs to the FdhE family.

The protein resides in the cytoplasm. Necessary for formate dehydrogenase activity. The chain is Protein FdhE from Salmonella arizonae (strain ATCC BAA-731 / CDC346-86 / RSK2980).